We begin with the raw amino-acid sequence, 149 residues long: Ribonuclease HI (149 aa).

Residues 1–140 (MIIGYFDGLC…AYELVRRGKL (140 aa)) enclose the RNase H type-1 domain. D7, E52, D76, and D125 together coordinate Mg(2+). The Mn(2+) site is built by D7, E52, D76, and D125. A disulfide bridge links C58 with C145.

Monomer. Requires Mn(2+) as cofactor. Mg(2+) is required as a cofactor. Co(2+) serves as cofactor. It depends on Ni(2+) as a cofactor. The disulfide bond confers considerable stability to the protein.

Its subcellular location is the cytoplasm. The catalysed reaction is Endonucleolytic cleavage to 5'-phosphomonoester.. Its function is as follows. Nuclease that specifically degrades the RNA of RNA-DNA hybrids. Endonucleolytically removes RNA primers from the Okazaki fragments of lagging strand synthesis on its own. In the presence of Mn(2+) or Co(2+) can also cleave an RNA-RNA hybrid; the dsRNase activity is 10- 100-fold lower than RNase H activity. Complements the temperature-sensitive phenotype of an E.coli double rnhA/rnhB (RNase H) disruption mutant. This is Ribonuclease HI (rnhA) from Sulfurisphaera tokodaii (strain DSM 16993 / JCM 10545 / NBRC 100140 / 7) (Sulfolobus tokodaii).